We begin with the raw amino-acid sequence, 274 residues long: Large ribosomal subunit protein uL2 (274 aa).

A disordered region spans residues histidine 200–lysine 274. 2 stretches are compositionally biased toward basic residues: residues lysine 207–asparagine 220 and leucine 255–lysine 274.

This sequence belongs to the universal ribosomal protein uL2 family. As to quaternary structure, part of the 50S ribosomal subunit. Forms a bridge to the 30S subunit in the 70S ribosome.

Its function is as follows. One of the primary rRNA binding proteins. Required for association of the 30S and 50S subunits to form the 70S ribosome, for tRNA binding and peptide bond formation. It has been suggested to have peptidyltransferase activity; this is somewhat controversial. Makes several contacts with the 16S rRNA in the 70S ribosome. The chain is Large ribosomal subunit protein uL2 from Parabacteroides distasonis (strain ATCC 8503 / DSM 20701 / CIP 104284 / JCM 5825 / NCTC 11152).